A 198-amino-acid chain; its full sequence is A-type ATP synthase subunit E (198 aa).

The protein belongs to the V-ATPase E subunit family. Has multiple subunits with at least A(3), B(3), C, D, E, F, H, I and proteolipid K(x).

It is found in the cell membrane. In terms of biological role, component of the A-type ATP synthase that produces ATP from ADP in the presence of a proton gradient across the membrane. In Pyrococcus furiosus (strain ATCC 43587 / DSM 3638 / JCM 8422 / Vc1), this protein is A-type ATP synthase subunit E.